The chain runs to 210 residues: Beta-crystallin A4 (210 aa).

The tract at residues 1–25 (MSGMFSGSISETSGMSLQCTKSAGH) is N-terminal arm. Beta/gamma crystallin 'Greek key' domains lie at 26–65 (WKIVVWDEEGFQGRRHEFTAECPSVLELGFETVRSLKVLS) and 66–112 (GAWV…RPVA). The connecting peptide stretch occupies residues 113–118 (CANHRD). Beta/gamma crystallin 'Greek key' domains lie at 119-160 (SRLT…HVHS) and 161-209 (GAWV…RRIQ).

It belongs to the beta/gamma-crystallin family. Homo/heterodimer, or complexes of higher-order. The structure of beta-crystallin oligomers seems to be stabilized through interactions between the N-terminal arms.

In terms of biological role, crystallins are the dominant structural components of the vertebrate eye lens. In Bos taurus (Bovine), this protein is Beta-crystallin A4 (CRYBA4).